A 170-amino-acid polypeptide reads, in one-letter code: Crossover junction endodeoxyribonuclease RuvC (170 aa).

Active-site residues include Asp12, Glu72, and Asp144. Mg(2+) is bound by residues Asp12, Glu72, and Asp144.

The protein belongs to the RuvC family. As to quaternary structure, homodimer which binds Holliday junction (HJ) DNA. The HJ becomes 2-fold symmetrical on binding to RuvC with unstacked arms; it has a different conformation from HJ DNA in complex with RuvA. In the full resolvosome a probable DNA-RuvA(4)-RuvB(12)-RuvC(2) complex forms which resolves the HJ. Mg(2+) is required as a cofactor.

It is found in the cytoplasm. The catalysed reaction is Endonucleolytic cleavage at a junction such as a reciprocal single-stranded crossover between two homologous DNA duplexes (Holliday junction).. Functionally, the RuvA-RuvB-RuvC complex processes Holliday junction (HJ) DNA during genetic recombination and DNA repair. Endonuclease that resolves HJ intermediates. Cleaves cruciform DNA by making single-stranded nicks across the HJ at symmetrical positions within the homologous arms, yielding a 5'-phosphate and a 3'-hydroxyl group; requires a central core of homology in the junction. The consensus cleavage sequence is 5'-(A/T)TT(C/G)-3'. Cleavage occurs on the 3'-side of the TT dinucleotide at the point of strand exchange. HJ branch migration catalyzed by RuvA-RuvB allows RuvC to scan DNA until it finds its consensus sequence, where it cleaves and resolves the cruciform DNA. The sequence is that of Crossover junction endodeoxyribonuclease RuvC from Nitrobacter hamburgensis (strain DSM 10229 / NCIMB 13809 / X14).